The sequence spans 234 residues: Protein SSP120 (234 aa).

Residues 1–22 (MRFLRGFVFSLAFTLYKVTATA) form the signal peptide. EF-hand domains lie at 52 to 87 (LKDY…NREE) and 108 to 143 (MAKR…GNKF). The residue at position 212 (Thr212) is a Phosphothreonine.

The chain is Protein SSP120 (SSP120) from Saccharomyces cerevisiae (strain ATCC 204508 / S288c) (Baker's yeast).